The sequence spans 811 residues: DNA gyrase subunit A (811 aa).

Positions 30–493 (LPDVRDGLKP…LEEDIGKEDL (464 aa)) constitute a Topo IIA-type catalytic domain. Catalysis depends on tyrosine 118, which acts as the O-(5'-phospho-DNA)-tyrosine intermediate. A GyrA-box motif is present at residues 520-526 (QGRGGRG).

This sequence belongs to the type II topoisomerase GyrA/ParC subunit family. As to quaternary structure, heterotetramer, composed of two GyrA and two GyrB chains. In the heterotetramer, GyrA contains the active site tyrosine that forms a transient covalent intermediate with DNA, while GyrB binds cofactors and catalyzes ATP hydrolysis.

Its subcellular location is the cytoplasm. It catalyses the reaction ATP-dependent breakage, passage and rejoining of double-stranded DNA.. Functionally, a type II topoisomerase that negatively supercoils closed circular double-stranded (ds) DNA in an ATP-dependent manner to modulate DNA topology and maintain chromosomes in an underwound state. Negative supercoiling favors strand separation, and DNA replication, transcription, recombination and repair, all of which involve strand separation. Also able to catalyze the interconversion of other topological isomers of dsDNA rings, including catenanes and knotted rings. Type II topoisomerases break and join 2 DNA strands simultaneously in an ATP-dependent manner. This Deinococcus deserti (strain DSM 17065 / CIP 109153 / LMG 22923 / VCD115) protein is DNA gyrase subunit A.